A 122-amino-acid chain; its full sequence is Large ribosomal subunit protein uL14 (122 aa).

It belongs to the universal ribosomal protein uL14 family. In terms of assembly, part of the 50S ribosomal subunit. Forms a cluster with proteins L3 and L19. In the 70S ribosome, L14 and L19 interact and together make contacts with the 16S rRNA in bridges B5 and B8.

Functionally, binds to 23S rRNA. Forms part of two intersubunit bridges in the 70S ribosome. This is Large ribosomal subunit protein uL14 from Desulfotalea psychrophila (strain LSv54 / DSM 12343).